Consider the following 424-residue polypeptide: Histidine--tRNA ligase (424 aa).

This sequence belongs to the class-II aminoacyl-tRNA synthetase family. Homodimer.

The protein localises to the cytoplasm. The enzyme catalyses tRNA(His) + L-histidine + ATP = L-histidyl-tRNA(His) + AMP + diphosphate + H(+). This Shewanella denitrificans (strain OS217 / ATCC BAA-1090 / DSM 15013) protein is Histidine--tRNA ligase.